We begin with the raw amino-acid sequence, 121 residues long: Large ribosomal subunit protein uL18 (121 aa).

Belongs to the universal ribosomal protein uL18 family. Part of the 50S ribosomal subunit; part of the 5S rRNA/L5/L18/L25 subcomplex. Contacts the 5S and 23S rRNAs.

In terms of biological role, this is one of the proteins that bind and probably mediate the attachment of the 5S RNA into the large ribosomal subunit, where it forms part of the central protuberance. This Dehalococcoides mccartyi (strain ATCC BAA-2266 / KCTC 15142 / 195) (Dehalococcoides ethenogenes (strain 195)) protein is Large ribosomal subunit protein uL18.